Here is a 396-residue protein sequence, read N- to C-terminus: L-cysteine desulfidase (396 aa).

Catalysis depends on Cys-23, which acts as the Proton acceptor. 3 residues coordinate [4Fe-4S] cluster: Cys-287, Cys-329, and Cys-336.

It belongs to the L-cysteine desulfidase family. As to quaternary structure, homotrimer. The cofactor is [4Fe-4S] cluster.

It carries out the reaction L-cysteine + H2O = hydrogen sulfide + pyruvate + NH4(+) + H(+). Its function is as follows. Catalyzes the cleavage of L-cysteine to form 2-aminoprop-2-enoate and sulfide. The former then spontaneously hydrolyzes to pyruvate and NH(3). May be responsible for the production of sulfide required for the biosynthesis of iron-sulfur centers in this archaea. The sequence is that of L-cysteine desulfidase from Methanococcus maripaludis (strain DSM 14266 / JCM 13030 / NBRC 101832 / S2 / LL).